Consider the following 382-residue polypeptide: UDP-4-amino-4-deoxy-L-arabinose--oxoglutarate aminotransferase (382 aa).

Lys-183 carries the post-translational modification N6-(pyridoxal phosphate)lysine.

Belongs to the DegT/DnrJ/EryC1 family. ArnB subfamily. In terms of assembly, homodimer. Requires pyridoxal 5'-phosphate as cofactor.

It carries out the reaction UDP-4-amino-4-deoxy-beta-L-arabinose + 2-oxoglutarate = UDP-beta-L-threo-pentopyranos-4-ulose + L-glutamate. It functions in the pathway nucleotide-sugar biosynthesis; UDP-4-deoxy-4-formamido-beta-L-arabinose biosynthesis; UDP-4-deoxy-4-formamido-beta-L-arabinose from UDP-alpha-D-glucuronate: step 2/3. The protein operates within bacterial outer membrane biogenesis; lipopolysaccharide biosynthesis. In terms of biological role, catalyzes the conversion of UDP-4-keto-arabinose (UDP-Ara4O) to UDP-4-amino-4-deoxy-L-arabinose (UDP-L-Ara4N). The modified arabinose is attached to lipid A and is required for resistance to polymyxin and cationic antimicrobial peptides. This chain is UDP-4-amino-4-deoxy-L-arabinose--oxoglutarate aminotransferase, found in Pseudomonas aeruginosa (strain UCBPP-PA14).